Here is a 264-residue protein sequence, read N- to C-terminus: Propanediol uptake facilitator PduF (264 aa).

2 helical membrane-spanning segments follow: residues 10 to 30 (GAEF…LSAL) and 42 to 62 (ICII…GISG). Residues 66-68 (NPA) carry the NPA 1 motif. 3 consecutive transmembrane segments (helical) span residues 84–104 (VLPY…LAYV), 143–163 (VWQA…MIMA), and 179–199 (LLIG…TGFA). Residues 201–203 (NPA) carry the NPA 2 motif. The chain crosses the membrane as a helical span at residues 228–248 (IPYFIVPIVAPVIGACAGAAI).

The protein belongs to the MIP/aquaporin (TC 1.A.8) family.

It localises to the cell inner membrane. In terms of biological role, probably facilitates diffusion of 1,2-propanediol (1,2-PD) into the cell. Modeling suggests active transport of 1,2-PD is required at low extracellular concentrations to allow maximal growth and saturation of PduP/PduQ within the bacterial microcompartment (BMC); this protein may be the cellular transporter. Functionally, the 1,2-PD-specific bacterial microcompartment (BMC) concentrates low levels of 1,2-PD catabolic enzymes, concentrates volatile reaction intermediates thus enhancing pathway flux and keeps the level of toxic, mutagenic propionaldehyde low. In Salmonella typhimurium (strain LT2 / SGSC1412 / ATCC 700720), this protein is Propanediol uptake facilitator PduF.